Consider the following 201-residue polypeptide: Transcription factor MYB82 (201 aa).

2 HTH myb-type domains span residues 9 to 61 and 62 to 116; these read KSYV…KNYL and RPNI…NKKP. DNA-binding regions (H-T-H motif) lie at residues 37–61 and 89–112; these read WADI…KNYL and WSLI…NTHL. The disordered stretch occupies residues 112 to 133; the sequence is LNKKPNSRRQNAPESIVGATPF.

Homodimer and heterodimer with GL1. Part of the WD40-bHLH-MYB complex. Interacts with BHLH012/MYC1 and BHLH042/TT8. Interacts (via N-terminus) with GL1 and GL3. As to expression, mainly expressed in the trichomes of new leaves.

It localises to the nucleus. Functionally, transcription activation factor positively regulating trichomes development. Has a function nearly equivalent to that of GL1 and can complement gl1 mutants. The sequence is that of Transcription factor MYB82 (MYB82) from Arabidopsis thaliana (Mouse-ear cress).